A 306-amino-acid chain; its full sequence is Agmatinase (306 aa).

Residues His-128, Asp-151, His-153, Asp-155, Asp-232, and Asp-234 each contribute to the Mn(2+) site.

It belongs to the arginase family. Agmatinase subfamily. Mn(2+) is required as a cofactor.

The catalysed reaction is agmatine + H2O = urea + putrescine. It participates in amine and polyamine biosynthesis; putrescine biosynthesis via agmatine pathway; putrescine from agmatine: step 1/1. Its function is as follows. Catalyzes the formation of putrescine from agmatine. The sequence is that of Agmatinase (speB) from Proteus mirabilis.